We begin with the raw amino-acid sequence, 194 residues long: MNLIPTVIETTNRGERAYDIYSRLLKDRIIMLGSQIDDNVANSIVSQLLFLQAQDAEKDIYLYINSPGGSVTAGFAIYDTIQHIKPDVQTICIGMAASMGSFLLAAGAKGKRFALPNAEVMIHQPLGGAQGQATEIEIAANHILKTRAKLNQILAERTGQSIEKIEQDTDRDNFLSAEEAKDYGLVDQVMVPES.

The active-site Nucleophile is Ser98. The active site involves His123.

The protein belongs to the peptidase S14 family. In terms of assembly, fourteen ClpP subunits assemble into 2 heptameric rings which stack back to back to give a disk-like structure with a central cavity, resembling the structure of eukaryotic proteasomes.

Its subcellular location is the cytoplasm. The enzyme catalyses Hydrolysis of proteins to small peptides in the presence of ATP and magnesium. alpha-casein is the usual test substrate. In the absence of ATP, only oligopeptides shorter than five residues are hydrolyzed (such as succinyl-Leu-Tyr-|-NHMec, and Leu-Tyr-Leu-|-Tyr-Trp, in which cleavage of the -Tyr-|-Leu- and -Tyr-|-Trp bonds also occurs).. Cleaves peptides in various proteins in a process that requires ATP hydrolysis. Has a chymotrypsin-like activity. Plays a major role in the degradation of misfolded proteins. The polypeptide is ATP-dependent Clp protease proteolytic subunit (Staphylococcus saprophyticus subsp. saprophyticus (strain ATCC 15305 / DSM 20229 / NCIMB 8711 / NCTC 7292 / S-41)).